A 517-amino-acid polypeptide reads, in one-letter code: MAAPRGPGLFLIPALLGLLGVAWCSLSFGVSRDDDLLLPYPLARRRPSRDCARVRSGSPEQESWPPPPTNPGASHHAAVRTFVSHFEGRAVAGHLTRVADPLRTFSVLEPGGAGGCAQKRRATVEDTAVPAGCRIAQNGGFFRMSTGECLGNVVSDGRLVSSSGGLQNAQFGIRRDGTIVTGYLSEEEVLDPVNPFVQLLSGVVWLIRNGNIYINESQAIECDETQETGSFSKFVNVMSARTAVGHDREGQLILFHADGQTEQRGLNLWEMAEFLRQQDVVNAINLDGGGSATFVLNGTLASYPSDHCQDNMWRCPRQVSTVVCVHEPRCQPPDCSGHGTCVDGHCECTSHFWRGEACSELDCGPSNCSQHGLCTETGCHCDAGWTGSNCSEECPLGWYGPGCQRPCQCEHQCSCDPQTGNCSISQVRQCLQPTEATPRAGELASFTRTTWLALTLTLIFLLLISTGVNVSLFLGSRAERNRHLDGDYVYHPLQEVNGEALTAEKEHMEETSNPFKD.

The first 25 residues, 1-25 (MAAPRGPGLFLIPALLGLLGVAWCS), serve as a signal peptide directing secretion. The propeptide at 26–49 (LSFGVSRDDDLLLPYPLARRRPSR) is removed in mature form. Positions 49 to 75 (RDCARVRSGSPEQESWPPPPTNPGASH) are disordered. Topologically, residues 50–453 (DCARVRSGSP…ASFTRTTWLA (404 aa)) are lumenal. Disulfide bonds link cysteine 116-cysteine 149, cysteine 133-cysteine 324, cysteine 308-cysteine 315, cysteine 363-cysteine 374, and cysteine 381-cysteine 390. 2 N-linked (GlcNAc...) asparagine glycosylation sites follow: asparagine 215 and asparagine 297. Residues 359–391 (SELDCGPSNCSQHGLCTETGCHCDAGWTGSNCS) form the EGF-like domain. 3 N-linked (GlcNAc...) asparagine glycosylation sites follow: asparagine 367, asparagine 389, and asparagine 421. The chain crosses the membrane as a helical span at residues 454–474 (LTLTLIFLLLISTGVNVSLFL). Topologically, residues 475 to 517 (GSRAERNRHLDGDYVYHPLQEVNGEALTAEKEHMEETSNPFKD) are cytoplasmic. Positions 488–491 (YVYH) match the Tyrosine-based internalization motif motif. Residues 488-495 (YVYHPLQE) are mediates the interaction with AP4M1. The NPF internalization motif signature appears at 511-515 (TSNPF).

Homotetramer arranged as two disulfide-linked homodimers. Interacts with AP4M1. Post-translationally, the precursor is cleaved and activated in the trans-Golgi network by a furin endopeptidase.

It localises to the golgi apparatus. Its subcellular location is the golgi stack membrane. It is found in the trans-Golgi network. The catalysed reaction is N(4)-[6-(N-acetyl-alpha-D-glucosaminyl-1-phospho)-alpha-D-mannosyl-(1-&gt;2)-alpha-D-mannosyl-(glycan)]-L-asparaginyl-[protein] + H2O = N(4)-[6-phospho-alpha-D-mannosyl-(1-&gt;2)-alpha-D-mannosyl-(glycan)]-L-asparaginyl-[protein] + N-acetyl-D-glucosamine + H(+). It participates in protein modification; protein glycosylation. Catalyzes the second step in the formation of the mannose 6-phosphate targeting signal on lysosomal enzyme oligosaccharides by removing GlcNAc residues from GlcNAc-alpha-P-mannose moieties, which are formed in the first step. Also hydrolyzes UDP-GlcNAc, a sugar donor for Golgi N-acetylglucosaminyltransferases. This Mus musculus (Mouse) protein is N-acetylglucosamine-1-phosphodiester alpha-N-acetylglucosaminidase (Nagpa).